The chain runs to 1058 residues: MPKRKDIQKIMVIGSGPIIIGQAAEFDYAGTQACLALKEEGYKVILVNSNPATIMTDKEIADKVYIEPLTLEFVNRIIRKERPDAILPTLGGQTGLNMAMALSKAGILDDLEIELLGTKLSAIDQAEDRDLFKQLMQELDQPIPESTIVKTVDEAVTFARDIGYPVIVRPAFTLGGTGGGICSSEEELCEITENGLKLSPVTQCLIERSIAGFKEIEYEVMRDSADNALVVCNMENFDPVGIHTGDSIVFAPTQTLSDIENQMLRDASLKIIRALKIEGGCNVQLALDPYSFKYYVIEVNPRVSRSSALASKATGYPIAKLAAKIAVGLTLDEMINPITGTTYAMFEPTLDYVVAKIPRFPFDKFEHGERQLGTQMKATGEVMAIGRNLEESLLKACRSLEIGVCHNEMTSLSNISDEELVTKVIKAQDDRLFYLSEAIRRGYSIEELESLTKIDLFFLDKLLHIVEIEQDLQMHVEHLESLKKAKRYGFSDQKIAEIWQKDESDIRAMRHSHSLYPVYKMVDTCAAEFDAKTPYFYSTYELENESVQSNKESILVLGSGPIRIGQGVEFDYATVHSVKAIQKAGYEAIIMNSNPETVSTDFSVSDKLYFEPLTFEDVMNVIDLEQPKGVIVQFGGQTAINLAQALSEAGVTILGTQVEDLDRAEDRDLFEKALKELGIPQPQGQTATNEEEALEAAKKIGFPVLVRPSYVLGGRAMEIVENKEDLREYIRTAVKASPEHPILVDSYIFGKECEVDAISDGKSVLIPGIMEHIERAGVHSGDSMAVYPPQQLSKQIQETIAEYTKRLAIGLNCIGMMNVQFVIKNDQVYVIEVNPRASRTVPFLSKVPGIPMAQIATKLILGQPLKDLGYEDGLYPQSQLVHIKAPVFSFTKLAQVDSLLGPEMKSTGEVMGSDTSLEKALYKAFEANNSHLSEFGQIVFTIADDSKAEALSLARRFKAIGYQIMATQGTAAYFAEQGLSACLVGKIGDAANDIPTLVRHGHVQAIVNTVGIKRTADKDGQMIRSSAIEQGVPLFTALDTAKAMLTVLESRCFNIEAI.

The tract at residues 1–401 (MPKRKDIQKI…SLLKACRSLE (401 aa)) is carboxyphosphate synthetic domain. The ATP site is built by R129, R169, G175, G176, R208, I210, E215, G241, I242, H243, Q284, and E298. Residues 133–327 (KQLMQELDQP…IAKLAAKIAV (195 aa)) form the ATP-grasp 1 domain. The Mg(2+) site is built by Q284, E298, and N300. Residues Q284, E298, and N300 each contribute to the Mn(2+) site. Residues 402–546 (IGVCHNEMTS…YSTYELENES (145 aa)) form an oligomerization domain region. Positions 547–929 (VQSNKESILV…ALYKAFEANN (383 aa)) are carbamoyl phosphate synthetic domain. The 191-residue stretch at 671–861 (EKALKELGIP…MAQIATKLIL (191 aa)) folds into the ATP-grasp 2 domain. Positions 707, 746, 748, 752, 777, 778, 779, 780, 820, and 832 each coordinate ATP. Mg(2+)-binding residues include Q820, E832, and N834. Positions 820, 832, and 834 each coordinate Mn(2+). In terms of domain architecture, MGS-like spans 930 to 1058 (SHLSEFGQIV…ESRCFNIEAI (129 aa)). An allosteric domain region spans residues 930–1058 (SHLSEFGQIV…ESRCFNIEAI (129 aa)).

It belongs to the CarB family. As to quaternary structure, composed of two chains; the small (or glutamine) chain promotes the hydrolysis of glutamine to ammonia, which is used by the large (or ammonia) chain to synthesize carbamoyl phosphate. Tetramer of heterodimers (alpha,beta)4. Mg(2+) serves as cofactor. Requires Mn(2+) as cofactor.

The enzyme catalyses hydrogencarbonate + L-glutamine + 2 ATP + H2O = carbamoyl phosphate + L-glutamate + 2 ADP + phosphate + 2 H(+). It carries out the reaction hydrogencarbonate + NH4(+) + 2 ATP = carbamoyl phosphate + 2 ADP + phosphate + 2 H(+). The protein operates within amino-acid biosynthesis; L-arginine biosynthesis; carbamoyl phosphate from bicarbonate: step 1/1. It functions in the pathway pyrimidine metabolism; UMP biosynthesis via de novo pathway; (S)-dihydroorotate from bicarbonate: step 1/3. Its function is as follows. Large subunit of the glutamine-dependent carbamoyl phosphate synthetase (CPSase). CPSase catalyzes the formation of carbamoyl phosphate from the ammonia moiety of glutamine, carbonate, and phosphate donated by ATP, constituting the first step of 2 biosynthetic pathways, one leading to arginine and/or urea and the other to pyrimidine nucleotides. The large subunit (synthetase) binds the substrates ammonia (free or transferred from glutamine from the small subunit), hydrogencarbonate and ATP and carries out an ATP-coupled ligase reaction, activating hydrogencarbonate by forming carboxy phosphate which reacts with ammonia to form carbamoyl phosphate. The chain is Carbamoyl phosphate synthase large chain from Streptococcus pyogenes serotype M49 (strain NZ131).